The sequence spans 428 residues: Patatin-like protein 3 (428 aa).

The PNPLA domain maps to 38 to 252 (LSIDGGGIRG…AANNPTLCAI (215 aa)). The GXGXXG motif lies at 42–47 (GGGIRG). The GXSXG motif lies at 80–84 (GTSTG). S82 acts as the Nucleophile in catalysis. D239 functions as the Proton acceptor in the catalytic mechanism. The short motif at 239-241 (DGG) is the DGA/G element. A Phosphoserine modification is found at S423.

It belongs to the patatin family. In terms of tissue distribution, expressed specifically in the stigma, ovary and funiculus of the ovary.

The protein localises to the cytoplasm. Its function is as follows. Possesses non-specific lipolytic acyl hydrolase (LAH) activity. Catalyzes the hydrolysis of the neutral lipids monogalactosyldiacylglycerol (MGDG), digalactosyldiacylglycerol (DGDG) and phosphatidylglycerol (PG), and less efficiently the polar lipids phosphatidylcholine (PC) and phosphatidylinositol (PI), but not the storage lipid triacylglycerol (TAG). May play a role in root development. The protein is Patatin-like protein 3 (PLP3) of Arabidopsis thaliana (Mouse-ear cress).